We begin with the raw amino-acid sequence, 479 residues long: FAD-dependent monooxygenase cdmI (479 aa).

The FAD site is built by glutamate 43, glycine 57, and arginine 116. Asparagine 156 and asparagine 198 each carry an N-linked (GlcNAc...) asparagine glycan. FAD-binding residues include aspartate 315 and alanine 328. Residues 453-473 traverse the membrane as a helical segment; that stretch reads PFILAVLAGLGFLLTMFKQQW.

It belongs to the paxM FAD-dependent monooxygenase family. Requires FAD as cofactor.

The protein localises to the membrane. It carries out the reaction verruculide C + AH2 + O2 = verruculide C epoxide + A + H2O. The protein operates within secondary metabolite biosynthesis; terpenoid biosynthesis. In terms of biological role, FAD-dependent monooxygenase; part of the gene cluster that mediates the biosynthesis of chrodrimanin B, a meroterpenoid that acts as a potent blocker of insect GABA-gated chloride channels. The first step of the pathway is the biosynthesis of 6-hydroxymellein by the polyketide synthase cdmE. The prenyltransferase cdmH acts as a 6-hydroxymellein 5-farnesyltransferase and produces the hydrophobic metabolite verruculide C. The FAD-dependent monooxygenase cdmI further converts verruculide C into verruculide B. The terpene cyclase cdmG then produced the pentacyclic molecule 3-hydroxypentacecilide A, the backbone structure of chrodrimanin B, via folding the farnesyl moiety of the substrate into the chair-boat conformation. The short-chain dehydrogenase/reductase cdmF functions as the 3-OH dehydrogenase that oxidizes the C-3 hydroxyl group of 3-hydroxypentacecilide A and produces chrodrimanin C, the dehydrogenated product of 3-hydroxypentacecilide A. The cytochrome P450 monooxygenase cdmJ then accepts both 3-hydroxypentacecilide A and chrodrimanin C and functions as a C-7-beta-hydroxylase to produce respectively chrodrimanin H and chrodrimanin F. The dioxygenase cdmA accepts chrodrimanin H to afford chrodrimanin E, which is further transformed to chrodrimanin A by the dioxygenase cdmD. CdmA can also accept chrodrimanin C as substrate to convert it into verruculide A, which is further converted into chrodrimanin T by cdmD. The last step of the biosynthesis is proposed to be performed by the acetyltransferase cdmC which acetylates chrodrimanin A to yield chrodrimanin B. The pathway may also lead to the production of additional shunt products, including chrodrimanins T and U. The polypeptide is FAD-dependent monooxygenase cdmI (Talaromyces verruculosus (Penicillium verruculosum)).